A 135-amino-acid chain; its full sequence is Large ribosomal subunit protein uL16c (135 aa).

Belongs to the universal ribosomal protein uL16 family. Part of the 50S ribosomal subunit.

The protein resides in the plastid. Its subcellular location is the chloroplast. This Eucalyptus globulus subsp. globulus (Tasmanian blue gum) protein is Large ribosomal subunit protein uL16c.